A 125-amino-acid chain; its full sequence is Small ribosomal subunit protein uS13 (125 aa).

The interval 90–125 (QRHRKGLPVRGQRTKTNARTRKGPKRTVAGKKKATK) is disordered.

Belongs to the universal ribosomal protein uS13 family. In terms of assembly, part of the 30S ribosomal subunit. Forms a loose heterodimer with protein S19. Forms two bridges to the 50S subunit in the 70S ribosome.

Located at the top of the head of the 30S subunit, it contacts several helices of the 16S rRNA. In the 70S ribosome it contacts the 23S rRNA (bridge B1a) and protein L5 of the 50S subunit (bridge B1b), connecting the 2 subunits; these bridges are implicated in subunit movement. Contacts the tRNAs in the A and P-sites. This is Small ribosomal subunit protein uS13 from Bifidobacterium longum (strain DJO10A).